A 95-amino-acid chain; its full sequence is Defensin-A3 (95 aa).

Residues 1 to 19 (MRTLGLLLALLFLAAQTPA) form the signal peptide. Residues 20 to 61 (QLMGEEAEEATGRPEATEAQEAAAALMAARAADRHVTDPEQQ) constitute a propeptide that is removed on maturation. 3 disulfide bridges follow: Cys-66/Cys-93, Cys-68/Cys-82, and Cys-72/Cys-92.

Belongs to the alpha-defensin family. Highly expressed in spleen, and expressed at lower levels in intestin and lung.

Its subcellular location is the secreted. Has antimicrobial activity. The sequence is that of Defensin-A3 from Ornithorhynchus anatinus (Duckbill platypus).